A 260-amino-acid chain; its full sequence is Imidazole glycerol phosphate synthase subunit HisF (260 aa).

Residues D11 and D130 contribute to the active site.

Belongs to the HisA/HisF family. Heterodimer of HisH and HisF.

The protein resides in the cytoplasm. It catalyses the reaction 5-[(5-phospho-1-deoxy-D-ribulos-1-ylimino)methylamino]-1-(5-phospho-beta-D-ribosyl)imidazole-4-carboxamide + L-glutamine = D-erythro-1-(imidazol-4-yl)glycerol 3-phosphate + 5-amino-1-(5-phospho-beta-D-ribosyl)imidazole-4-carboxamide + L-glutamate + H(+). It participates in amino-acid biosynthesis; L-histidine biosynthesis; L-histidine from 5-phospho-alpha-D-ribose 1-diphosphate: step 5/9. Functionally, IGPS catalyzes the conversion of PRFAR and glutamine to IGP, AICAR and glutamate. The HisF subunit catalyzes the cyclization activity that produces IGP and AICAR from PRFAR using the ammonia provided by the HisH subunit. This chain is Imidazole glycerol phosphate synthase subunit HisF, found in Thermomicrobium roseum (strain ATCC 27502 / DSM 5159 / P-2).